The chain runs to 622 residues: Chaperone protein HscA homolog (622 aa).

It belongs to the heat shock protein 70 family.

Chaperone involved in the maturation of iron-sulfur cluster-containing proteins. Has a low intrinsic ATPase activity which is markedly stimulated by HscB. The protein is Chaperone protein HscA homolog of Delftia acidovorans (strain DSM 14801 / SPH-1).